The primary structure comprises 295 residues: Probable dTDP-4,6-dihydroxy-2-methyloxan-3-one 4-ketoreductase (295 aa).

NADH is bound by residues 10 to 12 (GML), 36 to 37 (DV), 60 to 62 (AYT), tyrosine 126, and lysine 130. NADPH-binding positions include 11–12 (ML), 36–37 (DV), 60–62 (AYT), tyrosine 126, and lysine 130. Tyrosine 126 functions as the Proton donor/acceptor in the catalytic mechanism.

Belongs to the dTDP-4-dehydrorhamnose reductase family. Requires Mg(2+) as cofactor.

It participates in antibiotic biosynthesis. In terms of biological role, involved in the biosynthesis of one of the two 2,6-deoxysugars, dTDP-L-oleandrose, attached to the macrolactone ring oleandolide to produce the aglycone antibiotic oleandomycin. Probably catalyzes the reduction of dTDP-4-keto-2,6-dideoxy-beta-L-galactose to yield dTDP-L-olivose. The protein is Probable dTDP-4,6-dihydroxy-2-methyloxan-3-one 4-ketoreductase of Streptomyces antibioticus.